The chain runs to 324 residues: G patch domain-containing protein 4 (324 aa).

2 disordered regions span residues M1 to L30 and L123 to E324. Residues G11–A57 enclose the G-patch domain. Over residues F14–L30 the composition is skewed to basic and acidic residues. The span at K131–S141 shows a compositional bias: low complexity. Over residues S186–R215 the composition is skewed to basic and acidic residues. Positions H244–R253 are enriched in basic residues. The span at A254–E270 shows a compositional bias: basic and acidic residues. Residues P296 to F309 are compositionally biased toward polar residues. Basic residues predominate over residues K312–E324.

This Xenopus laevis (African clawed frog) protein is G patch domain-containing protein 4 (gpatch4).